A 321-amino-acid chain; its full sequence is Secreted RxLR effector protein 71 (321 aa).

The N-terminal stretch at 1–23 (MRPTGWRWPVLSLLLVLLPFQAA) is a signal peptide. The short motif at 84-87 (RSLR) is the RxLR element. A glycan (N-linked (GlcNAc...) asparagine) is linked at asparagine 114. Residues 210 to 237 (VSLGRDGNGPVRGISSSPTRLTRPRMGG) are disordered.

The protein belongs to the RxLR effector family.

The protein resides in the secreted. It localises to the host cell. Functionally, secreted effector that partially suppresses the host cell death induced by cell death-inducing proteins. This chain is Secreted RxLR effector protein 71, found in Plasmopara viticola (Downy mildew of grapevine).